The following is a 184-amino-acid chain: MLGDYRSGKTAIFNEIVGRKFGSYTNPSTFDYFYKEIMVDNELVGCNIWDTAGHEKFTTNLNKSFYRDVNCCVLCFDLHFEDSFKNLNKWMNEFHSKCLENGLENMELLPPFVLIGTKSDIPRTDISISNERIEQWCKNIEGQGIIDKVHYFETSAKLSQNIIMPFNTITKLALNYSNSIQKIK.

3–10 contacts GTP; sequence GDYRSGKT. The Effector region signature appears at 25 to 32; the sequence is TNPSTFDY. GTP-binding positions include 50-54 and 117-120; these read DTAGH and TKSD.

It belongs to the small GTPase superfamily. Rab family.

This chain is Ras-related protein RabN2 (rabN2), found in Dictyostelium discoideum (Social amoeba).